The primary structure comprises 455 residues: MSEFNLKYFGTDGVRGVANKTLTPELAFRLGRTGGAILTRHANDENKKPVVIVGRDTRISGEMLQQAIIAGFLSVGIDVLRLGVITTPAVAFLVQNLEADAGVQITASHNPAADNGIKFFGNDGFKLSDQLEYEIEQLLDESEDTLPRPSADGLGVVNNYPEGVQKYLEFLQKTIPTDLNGMRIALDGANGATSGLLARLFADLGTDFVTLGTEPNGLNINDGVGSTNPAALAELVKENDVQAGLAFDGDGDRLIAVDENGEIVDGDKIMFITGKFLNEQGRLKHNAVVSTVMSNIGFYKALAENDMTSIKTAVGDRYVMEEMIKSDHNLGGEQSGHIIFRDWATTGDGLLTALQLLYVMKETGKKLSELAAPVHIYPQKLVNITVADKEEIQHDPDVIAKIAEVEAQMAGDGRVLVRPSGTEPLLRVMVEAPTQELVEKYTESIANVVREKSGL.

Serine 108 serves as the catalytic Phosphoserine intermediate. The Mg(2+) site is built by serine 108, aspartate 248, aspartate 250, and aspartate 252. Serine 108 is subject to Phosphoserine.

This sequence belongs to the phosphohexose mutase family. Mg(2+) is required as a cofactor. Activated by phosphorylation.

It catalyses the reaction alpha-D-glucosamine 1-phosphate = D-glucosamine 6-phosphate. Functionally, catalyzes the conversion of glucosamine-6-phosphate to glucosamine-1-phosphate. This is Phosphoglucosamine mutase from Leuconostoc mesenteroides subsp. mesenteroides (strain ATCC 8293 / DSM 20343 / BCRC 11652 / CCM 1803 / JCM 6124 / NCDO 523 / NBRC 100496 / NCIMB 8023 / NCTC 12954 / NRRL B-1118 / 37Y).